Reading from the N-terminus, the 368-residue chain is 3-dehydroquinate synthase (368 aa).

NAD(+) contacts are provided by residues Thr-131–Thr-132, Lys-144, and Lys-153. Glu-186, His-249, and His-267 together coordinate Zn(2+).

Belongs to the sugar phosphate cyclases superfamily. Dehydroquinate synthase family. Co(2+) serves as cofactor. Zn(2+) is required as a cofactor. Requires NAD(+) as cofactor.

It is found in the cytoplasm. It catalyses the reaction 7-phospho-2-dehydro-3-deoxy-D-arabino-heptonate = 3-dehydroquinate + phosphate. It participates in metabolic intermediate biosynthesis; chorismate biosynthesis; chorismate from D-erythrose 4-phosphate and phosphoenolpyruvate: step 2/7. Functionally, catalyzes the conversion of 3-deoxy-D-arabino-heptulosonate 7-phosphate (DAHP) to dehydroquinate (DHQ). The protein is 3-dehydroquinate synthase of Pelagibacter ubique (strain HTCC1062).